A 530-amino-acid polypeptide reads, in one-letter code: Chaperonin GroEL 2 (530 aa).

ATP contacts are provided by residues 30–33 (TLGP), K51, 87–91 (DGTTT), G415, 479–481 (NAA), and D495.

Belongs to the chaperonin (HSP60) family. As to quaternary structure, forms a cylinder of 14 subunits composed of two heptameric rings stacked back-to-back. Interacts with the co-chaperonin GroES.

The protein resides in the cytoplasm. The catalysed reaction is ATP + H2O + a folded polypeptide = ADP + phosphate + an unfolded polypeptide.. Functionally, together with its co-chaperonin GroES, plays an essential role in assisting protein folding. The GroEL-GroES system forms a nano-cage that allows encapsulation of the non-native substrate proteins and provides a physical environment optimized to promote and accelerate protein folding. This chain is Chaperonin GroEL 2, found in Vibrio cholerae serotype O1 (strain ATCC 39315 / El Tor Inaba N16961).